We begin with the raw amino-acid sequence, 253 residues long: Chitooligosaccharide deacetylase (253 aa).

Mg(2+)-binding residues include histidine 61 and histidine 126.

This sequence belongs to the YdjC deacetylase family. ChbG subfamily. In terms of assembly, homodimer. It depends on Mg(2+) as a cofactor.

Its subcellular location is the cytoplasm. The catalysed reaction is N,N'-diacetylchitobiose + H2O = N-acetyl-beta-D-glucosaminyl-(1-&gt;4)-D-glucosamine + acetate. The enzyme catalyses diacetylchitobiose-6'-phosphate + H2O = N'-monoacetylchitobiose-6'-phosphate + acetate. Its pathway is glycan degradation; chitin degradation. Involved in the degradation of chitin. ChbG is essential for growth on the acetylated chitooligosaccharides chitobiose and chitotriose but is dispensable for growth on cellobiose and chitosan dimer, the deacetylated form of chitobiose. Deacetylation of chitobiose-6-P and chitotriose-6-P is necessary for both the activation of the chb promoter by the regulatory protein ChbR and the hydrolysis of phosphorylated beta-glucosides by the phospho-beta-glucosidase ChbF. Catalyzes the removal of only one acetyl group from chitobiose-6-P to yield monoacetylchitobiose-6-P, the inducer of ChbR and the substrate of ChbF. The polypeptide is Chitooligosaccharide deacetylase (Serratia marcescens).